A 291-amino-acid polypeptide reads, in one-letter code: Phosphate import ATP-binding protein PstB (291 aa).

In terms of domain architecture, ABC transporter spans 45–286; sequence YSTQNLDLWY…PADKQTEDYI (242 aa). Position 77-84 (77-84) interacts with ATP; it reads GPSGCGKS.

Belongs to the ABC transporter superfamily. Phosphate importer (TC 3.A.1.7) family. In terms of assembly, the complex is composed of two ATP-binding proteins (PstB), two transmembrane proteins (PstC and PstA) and a solute-binding protein (PstS).

Its subcellular location is the cell membrane. The enzyme catalyses phosphate(out) + ATP + H2O = ADP + 2 phosphate(in) + H(+). In terms of biological role, part of the ABC transporter complex PstSACB involved in phosphate import. Responsible for energy coupling to the transport system. The chain is Phosphate import ATP-binding protein PstB from Staphylococcus epidermidis (strain ATCC 12228 / FDA PCI 1200).